A 924-amino-acid chain; its full sequence is Inositol polyphosphate 4-phosphatase type II (924 aa).

Basic and acidic residues predominate over residues 1 to 13 (MEIKEEGASEEGQ). Disordered regions lie at residues 1–24 (MEIKEEGASEEGQHFLPTAQANDP), 481–516 (ILKKPPSPKSSTEESSPQDQPPVMRGQDSIPHHSDY), and 546–570 (DGGSEGSGGNNDGEKEPSLTDAIPS). A C2 domain is found at 23 to 165 (DPGDCQFTSI…LKSKEQLLVL (143 aa)).

The protein belongs to the inositol 3,4-bisphosphate 4-phosphatase family. Widely expressed with highest levels occurring in the skeletal muscle and heart.

It carries out the reaction a 1,2-diacyl-sn-glycero-3-phospho-(1D-myo-inositol-3,4-bisphosphate) + H2O = a 1,2-diacyl-sn-glycero-3-phospho-(1D-myo-inositol-3-phosphate) + phosphate. The catalysed reaction is 1D-myo-inositol 1,3,4-trisphosphate + H2O = 1D-myo-inositol 1,3-bisphosphate + phosphate. It catalyses the reaction 1D-myo-inositol 3,4-bisphosphate + H2O = 1D-myo-inositol 3-phosphate + phosphate. It functions in the pathway signal transduction; phosphatidylinositol signaling pathway. With respect to regulation, strongly inhibited by inositol hexakisphosphate. Its function is as follows. Catalyzes the hydrolysis of the 4-position phosphate of phosphatidylinositol 3,4-bisphosphate, inositol 1,3,4-trisphosphate and inositol 3,4-trisphosphate. Plays a role in the late stages of macropinocytosis by dephosphorylating phosphatidylinositol 3,4-bisphosphate in membrane ruffles. The lipid phosphatase activity is critical for tumor suppressor function. Antagonizes the PI3K-AKT/PKB signaling pathway by dephosphorylating phosphoinositides and thereby modulating cell cycle progression and cell survival. The protein is Inositol polyphosphate 4-phosphatase type II (INPP4B) of Homo sapiens (Human).